Here is a 275-residue protein sequence, read N- to C-terminus: UDP-Gal:alpha-D-GlcNAc-diphosphoundecaprenol beta-1,3-galactosyltransferase (275 aa).

Belongs to the glycosyltransferase 2 family. Mn(2+) is required as a cofactor.

It is found in the cell inner membrane. The catalysed reaction is N-acetyl-alpha-D-glucosaminyl-di-trans,octa-cis-undecaprenyl diphosphate + UDP-alpha-D-galactose = beta-D-Gal-(1-&gt;3)-alpha-D-GlcNAc-di-trans,octa-cis-undecaprenyl diphosphate + UDP + H(+). It participates in bacterial outer membrane biogenesis; LPS O-antigen biosynthesis. Its function is as follows. Catalyzes the addition of Gal, the second sugar moiety of the O7-antigen repeating unit, to GlcNAc-pyrophosphate-undecaprenol. The polypeptide is UDP-Gal:alpha-D-GlcNAc-diphosphoundecaprenol beta-1,3-galactosyltransferase (wbbD) (Escherichia coli).